Consider the following 576-residue polypeptide: Lysine--tRNA ligase, mitochondrial (576 aa).

The N-terminal 30 residues, 1–30 (MNVLLKRRSLTFAPRWLWCKCRSSRSRPYS), are a transit peptide targeting the mitochondrion.

Belongs to the class-II aminoacyl-tRNA synthetase family.

It is found in the mitochondrion matrix. The enzyme catalyses tRNA(Lys) + L-lysine + ATP = L-lysyl-tRNA(Lys) + AMP + diphosphate. In terms of biological role, catalyzes the attachment of lysine to tRNA(Lys) in the mitochondrion. The sequence is that of Lysine--tRNA ligase, mitochondrial (MSK1) from Saccharomyces cerevisiae (strain ATCC 204508 / S288c) (Baker's yeast).